The chain runs to 259 residues: Phosphatidylglycerol--prolipoprotein diacylglyceryl transferase (259 aa).

Transmembrane regions (helical) follow at residues 9-29 (IIFYLGPLAISWYSLSYVVGI), 55-75 (FITYAVIGIIVGGRLGFVLLY), 92-112 (EGGMSFHGGALGVIIAAYLFC), and 117-137 (VNFLSLTDIIAAVVPIGLFLG). Arginine 138 contributes to the a 1,2-diacyl-sn-glycero-3-phospho-(1'-sn-glycerol) binding site. 3 helical membrane passes run 172–192 (QLYEAFFEGLVLFCILAYATF), 201–221 (GLNSGLFLTFYALFRIAIEIF), and 228–248 (IGFILDNLTMGQILSVPMLIL).

It belongs to the Lgt family.

The protein localises to the cell inner membrane. The catalysed reaction is L-cysteinyl-[prolipoprotein] + a 1,2-diacyl-sn-glycero-3-phospho-(1'-sn-glycerol) = an S-1,2-diacyl-sn-glyceryl-L-cysteinyl-[prolipoprotein] + sn-glycerol 1-phosphate + H(+). Its pathway is protein modification; lipoprotein biosynthesis (diacylglyceryl transfer). Catalyzes the transfer of the diacylglyceryl group from phosphatidylglycerol to the sulfhydryl group of the N-terminal cysteine of a prolipoprotein, the first step in the formation of mature lipoproteins. The chain is Phosphatidylglycerol--prolipoprotein diacylglyceryl transferase from Rickettsia akari (strain Hartford).